A 154-amino-acid chain; its full sequence is Crossover junction endodeoxyribonuclease RuvC (154 aa).

Catalysis depends on residues aspartate 7, glutamate 67, and aspartate 139. 3 residues coordinate Mg(2+): aspartate 7, glutamate 67, and aspartate 139.

Belongs to the RuvC family. As to quaternary structure, homodimer which binds Holliday junction (HJ) DNA. The HJ becomes 2-fold symmetrical on binding to RuvC with unstacked arms; it has a different conformation from HJ DNA in complex with RuvA. In the full resolvosome a probable DNA-RuvA(4)-RuvB(12)-RuvC(2) complex forms which resolves the HJ. The cofactor is Mg(2+).

Its subcellular location is the cytoplasm. It carries out the reaction Endonucleolytic cleavage at a junction such as a reciprocal single-stranded crossover between two homologous DNA duplexes (Holliday junction).. The RuvA-RuvB-RuvC complex processes Holliday junction (HJ) DNA during genetic recombination and DNA repair. Endonuclease that resolves HJ intermediates. Cleaves cruciform DNA by making single-stranded nicks across the HJ at symmetrical positions within the homologous arms, yielding a 5'-phosphate and a 3'-hydroxyl group; requires a central core of homology in the junction. The consensus cleavage sequence is 5'-(A/T)TT(C/G)-3'. Cleavage occurs on the 3'-side of the TT dinucleotide at the point of strand exchange. HJ branch migration catalyzed by RuvA-RuvB allows RuvC to scan DNA until it finds its consensus sequence, where it cleaves and resolves the cruciform DNA. The sequence is that of Crossover junction endodeoxyribonuclease RuvC from Synechococcus sp. (strain CC9902).